Reading from the N-terminus, the 341-residue chain is Phenylalanine--tRNA ligase alpha subunit (341 aa).

Glutamate 254 is a Mg(2+) binding site.

It belongs to the class-II aminoacyl-tRNA synthetase family. Phe-tRNA synthetase alpha subunit type 1 subfamily. Tetramer of two alpha and two beta subunits. Mg(2+) serves as cofactor.

The protein localises to the cytoplasm. The catalysed reaction is tRNA(Phe) + L-phenylalanine + ATP = L-phenylalanyl-tRNA(Phe) + AMP + diphosphate + H(+). The polypeptide is Phenylalanine--tRNA ligase alpha subunit (Chlorobium phaeobacteroides (strain DSM 266 / SMG 266 / 2430)).